The following is a 276-amino-acid chain: Exosome complex component RRP43 (276 aa).

Alanine 2 carries the post-translational modification N-acetylalanine.

Belongs to the RNase PH family. In terms of assembly, component of the RNA exosome core complex (Exo-9), composed of EXOSC1, EXOSC2, EXOSC3, EXOSC4, EXOSC5, EXOSC6, EXOSC7, EXOSC8 and EXOSC9; within the complex interacts with EXOSC5 and EXOSC6. The catalytically inactive RNA exosome core complex (Exo-9) associates with the catalytic subunit EXOSC10/RRP6. Exo-9 may associate with DIS3 to form the nucleolar exosome complex, or DIS3L to form the cytoplasmic exosome complex. Exo-9 is formed by a hexameric base ring consisting of the heterodimers EXOSC4-EXOSC9, EXOSC5-EXOSC8 and EXOSC6-EXOSC7, and a cap ring consisting of EXOSC1, EXOSC2 and EXOSC3. The RNA exosome complex associates with cofactors C1D/RRP47, MPHOSPH6/MPP6 and MTREX/MTR4. Binds outer membrane protein opap from Neisseria gonorrhoeae.

The protein resides in the cytoplasm. The protein localises to the nucleus. Its subcellular location is the nucleolus. Non-catalytic component of the RNA exosome complex which has 3'-&gt;5' exoribonuclease activity and participates in a multitude of cellular RNA processing and degradation events. In the nucleus, the RNA exosome complex is involved in proper maturation of stable RNA species such as rRNA, snRNA and snoRNA, in the elimination of RNA processing by-products and non-coding 'pervasive' transcripts, such as antisense RNA species and promoter-upstream transcripts (PROMPTs), and of mRNAs with processing defects, thereby limiting or excluding their export to the cytoplasm. The RNA exosome may be involved in Ig class switch recombination (CSR) and/or Ig variable region somatic hypermutation (SHM) by targeting AICDA deamination activity to transcribed dsDNA substrates. In the cytoplasm, the RNA exosome complex is involved in general mRNA turnover and specifically degrades inherently unstable mRNAs containing AU-rich elements (AREs) within their 3' untranslated regions, and in RNA surveillance pathways, preventing translation of aberrant mRNAs. It seems to be involved in degradation of histone mRNA. The catalytic inactive RNA exosome core complex of 9 subunits (Exo-9) is proposed to play a pivotal role in the binding and presentation of RNA for ribonucleolysis, and to serve as a scaffold for the association with catalytic subunits and accessory proteins or complexes. EXOSC8 binds to ARE-containing RNAs. In Homo sapiens (Human), this protein is Exosome complex component RRP43 (EXOSC8).